Reading from the N-terminus, the 126-residue chain is Large ribosomal subunit protein bL17c (126 aa).

The transit peptide at 1–10 directs the protein to the chloroplast; it reads MIDNGGRFFA.

As to quaternary structure, component of the chloroplast large ribosomal subunit (LSU). Mature 70S chloroplast ribosomes of higher plants consist of a small (30S) and a large (50S) subunit. The 30S small subunit contains 1 molecule of ribosomal RNA (16S rRNA) and 24 different proteins. The 50S large subunit contains 3 rRNA molecules (23S, 5S and 4.5S rRNA) and 33 different proteins.

The protein resides in the plastid. It is found in the chloroplast. Its function is as follows. Component of the chloroplast ribosome (chloro-ribosome), a dedicated translation machinery responsible for the synthesis of chloroplast genome-encoded proteins, including proteins of the transcription and translation machinery and components of the photosynthetic apparatus. The polypeptide is Large ribosomal subunit protein bL17c (RPL17) (Spinacia oleracea (Spinach)).